A 736-amino-acid chain; its full sequence is 3',5'-cyclic-AMP phosphodiesterase 4B (736 aa).

Disordered stretches follow at residues 51 to 78, 189 to 209, and 282 to 301; these read QLPP…TTLP, LHGT…SRVN, and KQND…KKKK. S290 bears the Phosphoserine mark. The 330-residue stretch at 330 to 659 folds into the PDEase domain; the sequence is VNTENEDHLA…NWYQSMIPQS (330 aa). The active-site Proton donor is H406. H406 is a 3',5'-cyclic AMP binding site. 2 residues coordinate AMP: H406 and H410. Positions 410, 446, 447, and 564 each coordinate Zn(2+). The AMP site is built by D447, D564, Q615, and F618. D447 contributes to the Mg(2+) binding site. Mn(2+) is bound at residue D447. Q615 and F618 together coordinate 3',5'-cyclic AMP. S659 and S661 each carry phosphoserine. The tract at residues 685–736 is disordered; that stretch reads DEEDSEGPEKEGEGHSYFSSTKTLCVIDPENRDSLGETDIDIATEDKSPVDT.

It belongs to the cyclic nucleotide phosphodiesterase family. PDE4 subfamily. Interacts with DISC1. Zn(2+) serves as cofactor. Mg(2+) is required as a cofactor. It depends on Mn(2+) as a cofactor. As to expression, expressed in brain, heart, lung and skeletal muscle. Expressed in white blood cells. In terms of tissue distribution, brain-specific isoform.

It is found in the cytoplasm. Its subcellular location is the cell membrane. It carries out the reaction 3',5'-cyclic AMP + H2O = AMP + H(+). Its pathway is purine metabolism; 3',5'-cyclic AMP degradation; AMP from 3',5'-cyclic AMP: step 1/1. Its activity is regulated as follows. Inhibited by rolipram. In terms of biological role, hydrolyzes the second messenger cAMP, which is a key regulator of many important physiological processes. May be involved in mediating central nervous system effects of therapeutic agents ranging from antidepressants to antiasthmatic and anti-inflammatory agents. The chain is 3',5'-cyclic-AMP phosphodiesterase 4B from Homo sapiens (Human).